Consider the following 1025-residue polypeptide: MPIDYAELHCLSCFSFLRGASQPAELVQRAAELGYRALALTDACSVAGAVRAHQAAKETDLHLIHGSEIRIHQGPLLVLLAPCRRAWAELCALISLGRSQARKGDYRLEREQLEGTLPHCLALWVPDDAPHDAEQGRWFARHFGDRGHVAVALHHGPDDEARLQRLLALADRFRLPAVAAGGVLMHRRGRRALQDTLSALRHRRTLAAMGTALECSGERHLRSLHSLARLYPPALLRRSVHLADQCRFSLDKLRYEYPAELVPAGETPASYLRRLTLEGARRHWPQGMPDKVAHQVDHELALIAEMGYEPFFLTVHDVVAFARRRGILCQGRGSSANSAVCFCLGITAVDPARQSLLFERFISKERGEPPDIDVDFEHERREEVIQYIYRKYGRHRAALAATVIRYRPRSALRDAGRALGLDAATIDRLAGSIQWWDGKRVDPERLREAGLNPDDPRLARTVAIAGQLLGLPRHLSQHVGGFVISEGPISELVPTENAAMAGRTIIQWDKDDLEALGLLKVDVLALGMLSCIRRAFDLLAGFRGRRLTLADVPAEDPAVYRMISDADTMGVFQIESRAQMAMLPRLRPQTFYDLVIEVAIVRPGPIQGDMVHPYLRRREGLEPVDYPSEAVRGVLARTLGVPIFQEQVMQLAVVAAGFTPGEADALRRAMAAWKRKGGLGPFRDKLLKGMRRNGYCEDYAERLFRQIQGFGEYGFPESHAASFALLVYVSAWLKCHEPALFTCALLNSQPMGFYAPAQLLRDAERHGVEIRPVDVRHSDWDCSPEHRGDGEPALRLGLRLVRGLNRRAADRLIAARGRRPFRDVQEMARRAALHRRDLETLAHAGALRGLAGHRRAAWWQVLGAEAGLPVFEDLHIEEAAPALDAPAEGEDLVADYTSLGFTLGRHPLALLRPQLRRRRLLTAADLASTGHGRLVRTAGLVINRQRPGSAGGVTFLTLEDETGQINLVVWKATAEAQRRTLLAARLLMVSGIWERKGAVTHLVAGRLEDWSDWLGALDVRSRDFH.

Belongs to the DNA polymerase type-C family. DnaE2 subfamily.

Its subcellular location is the cytoplasm. It catalyses the reaction DNA(n) + a 2'-deoxyribonucleoside 5'-triphosphate = DNA(n+1) + diphosphate. DNA polymerase involved in damage-induced mutagenesis and translesion synthesis (TLS). It is not the major replicative DNA polymerase. The polypeptide is Error-prone DNA polymerase (Alkalilimnicola ehrlichii (strain ATCC BAA-1101 / DSM 17681 / MLHE-1)).